The chain runs to 231 residues: 4-aminobenzoate synthase (231 aa).

Fe(2+)-binding residues include Glu81, His88, Glu142, His174, Asp178, and His181.

The protein belongs to the CADD family. Homodimer. During infection, interacts with death domains of mammalian tumor necrosis factor (TNF) family receptors Fas, DR4, DR5 and to some extent TNFR1, but not with the respective downstream adapters. Requires Fe(2+) as cofactor. It depends on Mn(2+) as a cofactor.

The protein resides in the secreted. The protein localises to the host cytoplasm. With respect to regulation, the protein is a cosubstrate rather than a true enzyme and is left in an inactive state after a single turnover. Inactive under anaerobic conditions. Involved in de novo para-aminobenzoate (PABA) biosynthesis. Acts as a self-sacrificing or 'suicide' enzyme that utilizes its own active site tyrosine residue(s) as the substrate for PABA synthesis. The side chain of the tyrosine residue is released from the protein backbone via cleavage of the C(alpha)-C(beta) bond, leaving a glycine in place of the original tyrosine residue. Reaction requires O(2) and a reduced dimetal cofactor. Functionally, was also identified as a specific toxin that associates with death domains of tumor necrosis factor family (TNF) receptors and induces apoptosis in mammalian cell lines through a Caspase-dependent mechanism. The chain is 4-aminobenzoate synthase from Chlamydia trachomatis serovar D (strain ATCC VR-885 / DSM 19411 / UW-3/Cx).